Reading from the N-terminus, the 182-residue chain is Peptidyl-prolyl cis-trans isomerase C, mitochondrial (182 aa).

The N-terminal 20 residues, 1–20, are a transit peptide targeting the mitochondrion; the sequence is MFKRSIIQQSRLFSNSASRL. A PPIase cyclophilin-type domain is found at 25 to 181; the sequence is FFDPAVNGTK…AEIVIEEAGE (157 aa).

This sequence belongs to the cyclophilin-type PPIase family.

It is found in the mitochondrion matrix. It carries out the reaction [protein]-peptidylproline (omega=180) = [protein]-peptidylproline (omega=0). Inhibited by the immunosuppressant drug cyclosporin A and by SDZ NIM811, a PPIase inhibitor. In terms of biological role, PPIases accelerate the folding of proteins. It catalyzes the cis-trans isomerization of proline imidic peptide bonds in oligopeptides. This isozyme is required for growth on lactate at high temperature. In Saccharomyces cerevisiae (strain ATCC 204508 / S288c) (Baker's yeast), this protein is Peptidyl-prolyl cis-trans isomerase C, mitochondrial (CPR3).